The following is a 243-amino-acid chain: Cytochrome c1, heme protein (243 aa).

Residues 1–201 lie on the Mitochondrial intermembrane side of the membrane; that stretch reads GVDSHPPALP…CSNPWWDERK (201 aa). The region spanning 5-194 is the Cytochrome c domain; sequence HPPALPWPHF…VTCFLEWCSN (190 aa). Positions 39, 40, and 159 each coordinate heme. A helical membrane pass occupies residues 202–221; it reads LLGYKTIATLAVIAVSSGYY. At 222–243 the chain is on the mitochondrial matrix side; sequence NRFLSGLWRSRRLAFRPFNYSK.

This sequence belongs to the cytochrome c family. Component of the ubiquinol-cytochrome c oxidoreductase (cytochrome b-c1 complex, complex III, CIII), a multisubunit enzyme composed of 3 respiratory subunits cytochrome b, cytochrome c1 and Rieske protein, 2 core protein subunits, and additional low-molecular weight protein subunits. The complex exists as an obligatory dimer and forms supercomplexes (SCs) in the inner mitochondrial membrane with cytochrome c oxidase (complex IV, CIV). The cofactor is heme.

The protein localises to the mitochondrion inner membrane. It catalyses the reaction a quinol + 2 Fe(III)-[cytochrome c](out) = a quinone + 2 Fe(II)-[cytochrome c](out) + 2 H(+)(out). Component of the ubiquinol-cytochrome c oxidoreductase, a multisubunit transmembrane complex that is part of the mitochondrial electron transport chain which drives oxidative phosphorylation. The respiratory chain contains 3 multisubunit complexes succinate dehydrogenase (complex II, CII), ubiquinol-cytochrome c oxidoreductase (cytochrome b-c1 complex, complex III, CIII) and cytochrome c oxidase (complex IV, CIV), that cooperate to transfer electrons derived from NADH and succinate to molecular oxygen, creating an electrochemical gradient over the inner membrane that drives transmembrane transport and the ATP synthase. The cytochrome b-c1 complex catalyzes electron transfer from ubiquinol to cytochrome c, linking this redox reaction to translocation of protons across the mitochondrial inner membrane, with protons being carried across the membrane as hydrogens on the quinol. In the process called Q cycle, 2 protons are consumed from the matrix, 4 protons are released into the intermembrane space and 2 electrons are passed to cytochrome c. Cytochrome c1 is a catalytic core subunit containing a c-type heme. It transfers electrons from the [2Fe-2S] iron-sulfur cluster of the Rieske protein to cytochrome c. This is Cytochrome c1, heme protein from Euglena gracilis.